We begin with the raw amino-acid sequence, 188 residues long: Elongation factor P (188 aa).

It belongs to the elongation factor P family.

Its subcellular location is the cytoplasm. It functions in the pathway protein biosynthesis; polypeptide chain elongation. In terms of biological role, involved in peptide bond synthesis. Stimulates efficient translation and peptide-bond synthesis on native or reconstituted 70S ribosomes in vitro. Probably functions indirectly by altering the affinity of the ribosome for aminoacyl-tRNA, thus increasing their reactivity as acceptors for peptidyl transferase. This chain is Elongation factor P, found in Bradyrhizobium sp. (strain BTAi1 / ATCC BAA-1182).